A 97-amino-acid chain; its full sequence is Phosphoribosyl-ATP pyrophosphatase (97 aa).

It belongs to the PRA-PH family.

It is found in the cytoplasm. It catalyses the reaction 1-(5-phospho-beta-D-ribosyl)-ATP + H2O = 1-(5-phospho-beta-D-ribosyl)-5'-AMP + diphosphate + H(+). It functions in the pathway amino-acid biosynthesis; L-histidine biosynthesis; L-histidine from 5-phospho-alpha-D-ribose 1-diphosphate: step 2/9. The protein is Phosphoribosyl-ATP pyrophosphatase of Methanoculleus marisnigri (strain ATCC 35101 / DSM 1498 / JR1).